The following is a 1564-amino-acid chain: Nucleoporin nup184 (1564 aa).

It localises to the nucleus. The protein resides in the nuclear pore complex. In terms of biological role, interacts with pom152 in the core structure of the nuclear pore complex (NPC). Involved in the export of mRNA. The polypeptide is Nucleoporin nup184 (nup184) (Schizosaccharomyces pombe (strain 972 / ATCC 24843) (Fission yeast)).